A 210-amino-acid chain; its full sequence is Acyl-homoserine-lactone synthase (210 aa).

It belongs to the autoinducer synthase family.

It carries out the reaction a fatty acyl-[ACP] + S-adenosyl-L-methionine = an N-acyl-L-homoserine lactone + S-methyl-5'-thioadenosine + holo-[ACP] + H(+). In terms of biological role, required for the synthesis of OHHL (N-(3-oxohexanoyl)-L-homoserine lactone), an autoinducer molecule which binds to EsaR. OHHL is necessary for biosynthesis of EPS virulence factor (extracellular heteropolysaccharide) which plays a role in the development of Stewart's wilt on sweet corn. The sequence is that of Acyl-homoserine-lactone synthase (esaI) from Pantoea stewartii subsp. stewartii (Erwinia stewartii).